The primary structure comprises 356 residues: Histidinol-phosphate aminotransferase (356 aa).

K213 carries the N6-(pyridoxal phosphate)lysine modification.

It belongs to the class-II pyridoxal-phosphate-dependent aminotransferase family. Histidinol-phosphate aminotransferase subfamily. Homodimer. It depends on pyridoxal 5'-phosphate as a cofactor.

The catalysed reaction is L-histidinol phosphate + 2-oxoglutarate = 3-(imidazol-4-yl)-2-oxopropyl phosphate + L-glutamate. The protein operates within amino-acid biosynthesis; L-histidine biosynthesis; L-histidine from 5-phospho-alpha-D-ribose 1-diphosphate: step 7/9. This chain is Histidinol-phosphate aminotransferase, found in Clostridium novyi (strain NT).